A 128-amino-acid chain; its full sequence is KRAB domain-containing protein 1 (128 aa).

A KRAB domain is found at 15-86 (VAFEDVAVYF…QPQGVLSRND (72 aa)).

This chain is KRAB domain-containing protein 1 (KRBOX1), found in Homo sapiens (Human).